The sequence spans 507 residues: Steroid 17-alpha-hydroxylase/17,20 lyase (507 aa).

Residue Cys-441 participates in heme binding.

Belongs to the cytochrome P450 family. Requires heme as cofactor.

The protein localises to the endoplasmic reticulum membrane. It is found in the microsome membrane. The enzyme catalyses a C21-steroid + reduced [NADPH--hemoprotein reductase] + O2 = a 17alpha-hydroxy-C21-steroid + oxidized [NADPH--hemoprotein reductase] + H2O + H(+). It catalyses the reaction progesterone + reduced [NADPH--hemoprotein reductase] + O2 = 17alpha-hydroxyprogesterone + oxidized [NADPH--hemoprotein reductase] + H2O + H(+). The catalysed reaction is pregnenolone + reduced [NADPH--hemoprotein reductase] + O2 = 17alpha-hydroxypregnenolone + oxidized [NADPH--hemoprotein reductase] + H2O + H(+). It carries out the reaction 17alpha-hydroxyprogesterone + reduced [NADPH--hemoprotein reductase] + O2 = androst-4-ene-3,17-dione + acetate + oxidized [NADPH--hemoprotein reductase] + H2O + 2 H(+). The enzyme catalyses 17alpha-hydroxyprogesterone + reduced [NADPH--hemoprotein reductase] + O2 = 16alpha,17alpha-dihydroxyprogesterone + oxidized [NADPH--hemoprotein reductase] + H2O + H(+). It catalyses the reaction 16alpha,17alpha-dihydroxyprogesterone + reduced [NADPH--hemoprotein reductase] + O2 = 6beta,16alpha,17alpha-trihydroxyprogesterone + oxidized [NADPH--hemoprotein reductase] + H2O + H(+). The catalysed reaction is 17alpha-hydroxypregnenolone + reduced [NADPH--hemoprotein reductase] + O2 = 3beta-hydroxyandrost-5-en-17-one + acetate + oxidized [NADPH--hemoprotein reductase] + H2O + 2 H(+). It carries out the reaction 16alpha,17alpha-dihydroxypregnenolone + reduced [NADPH--hemoprotein reductase] + O2 = 3beta,16alpha-dihydroxy-androst-5-en-17-one + acetate + oxidized [NADPH--hemoprotein reductase] + H2O + 2 H(+). The enzyme catalyses 3beta-hydroxyandrost-5-en-17-one + reduced [NADPH--hemoprotein reductase] + O2 = 3beta,16alpha-dihydroxy-androst-5-en-17-one + oxidized [NADPH--hemoprotein reductase] + H2O + H(+). It catalyses the reaction androst-4-ene-3,17-dione + reduced [NADPH--hemoprotein reductase] + O2 = 16alpha-hydroxyandrost-4-ene-3,17-dione + oxidized [NADPH--hemoprotein reductase] + H2O + H(+). It participates in steroid hormone biosynthesis. It functions in the pathway steroid biosynthesis; glucocorticoid biosynthesis. Its activity is regulated as follows. Regulated predominantly by intracellular cAMP levels. The 17,20-lyase activity is stimulated by cytochrome b5, which acts as an allosteric effector increasing the Vmax of the lyase activity. Functionally, a cytochrome P450 monooxygenase involved in corticoid and androgen biosynthesis. Catalyzes 17-alpha hydroxylation of C21 steroids, which is common for both pathways. A second oxidative step, required only for androgen synthesis, involves an acyl-carbon cleavage. The 17-alpha hydroxy intermediates, as part of adrenal glucocorticoids biosynthesis pathway, are precursors of cortisol. Hydroxylates steroid hormones, pregnenolone and progesterone to form 17-alpha hydroxy metabolites, followed by the cleavage of the C17-C20 bond to form C19 steroids, dehydroepiandrosterone (DHEA) and androstenedione. Has 16-alpha hydroxylase activity. Catalyzes 16-alpha hydroxylation of 17-alpha hydroxy pregnenolone, followed by the cleavage of the C17-C20 bond to form 16-alpha-hydroxy DHEA. Also 16-alpha hydroxylates androgens, relevant for estriol synthesis. Mechanistically, uses molecular oxygen inserting one oxygen atom into a substrate, and reducing the second into a water molecule, with two electrons provided by NADPH via cytochrome P450 reductase (CPR; NADPH-ferrihemoprotein reductase). In Rattus norvegicus (Rat), this protein is Steroid 17-alpha-hydroxylase/17,20 lyase (Cyp17a1).